The chain runs to 132 residues: Transcription antitermination protein NusB (132 aa).

This sequence belongs to the NusB family.

Its function is as follows. Involved in transcription antitermination. Required for transcription of ribosomal RNA (rRNA) genes. Binds specifically to the boxA antiterminator sequence of the ribosomal RNA (rrn) operons. The polypeptide is Transcription antitermination protein NusB (Campylobacter jejuni subsp. jejuni serotype O:6 (strain 81116 / NCTC 11828)).